A 565-amino-acid chain; its full sequence is uncharacterized protein (565 aa).

Helical transmembrane passes span 14–34 (LAIFLTLFVGFWIGKIKIGKF), 36–56 (LGVVTSVLLVGVLVGQLDITV), 92–112 (MGFAAIMCVFCLIIPWILAKI), 117–137 (VGEAAGLLAGSQTISAVIGVA), and 157–177 (IIPVSYAVTYIFGTAGSAWVL). Residues 296–381 (PEVLDPQLLD…VDAAAKQLGY (86 aa)) enclose the RCK C-terminal domain. 6 helical membrane passes run 391-411 (MIFVGLGILIGGLIGALSIHM), 414-434 (VPISLSTSGGALIGGLFFGWL), 448-468 (ALWILDNVGLNMFIAVVGIAA), 481-501 (LSLFIVGALATSIPLIAGILM), 508-530 (FHPALVLGCTAGARTTTAALGAI), and 545-565 (VTYAVGNTLLIIWGVVIVLLM).

Belongs to the AAE transporter (TC 2.A.81) family.

The protein localises to the cell membrane. This is an uncharacterized protein from Bacteroides fragilis (strain YCH46).